Reading from the N-terminus, the 1044-residue chain is Protein ITPRID1 (1044 aa).

A compositionally biased stretch (polar residues) spans 1–14 (MMAQKSQGSDNLQE). 4 disordered regions span residues 1–20 (MMAQKSQGSDNLQEGQEKSK), 230–251 (EEKAGGESVQRTSVSAAKEHRR), 388–489 (MEEV…SSQE), and 583–607 (PEGAGKVQSHHNESQRSPGNDHTQD). Acidic residues predominate over residues 388-398 (MEEVQSFEEET). Polar residues-rich tracts occupy residues 460-469 (HSLVSSQDCQ) and 480-489 (RASMSFSSQE). A coiled-coil region spans residues 896–937 (SRDMSEEEREEAEQLQTLREALRQQVAELEFQLGDRAQQIRE).

The chain is Protein ITPRID1 from Homo sapiens (Human).